We begin with the raw amino-acid sequence, 209 residues long: Guanylate kinase (209 aa).

Residues 9 to 188 enclose the Guanylate kinase-like domain; that stretch reads GIMLVISSPS…SVYQIKCIFT (180 aa). 16–23 is a binding site for ATP; sequence SPSGGGKT.

The protein belongs to the guanylate kinase family.

Its subcellular location is the cytoplasm. It catalyses the reaction GMP + ATP = GDP + ADP. Its function is as follows. Essential for recycling GMP and indirectly, cGMP. In Ehrlichia chaffeensis (strain ATCC CRL-10679 / Arkansas), this protein is Guanylate kinase.